Reading from the N-terminus, the 476-residue chain is ATP synthase subunit beta (476 aa).

Glycine 154–threonine 161 contributes to the ATP binding site.

The protein belongs to the ATPase alpha/beta chains family. F-type ATPases have 2 components, CF(1) - the catalytic core - and CF(0) - the membrane proton channel. CF(1) has five subunits: alpha(3), beta(3), gamma(1), delta(1), epsilon(1). CF(0) has three main subunits: a(1), b(2) and c(9-12). The alpha and beta chains form an alternating ring which encloses part of the gamma chain. CF(1) is attached to CF(0) by a central stalk formed by the gamma and epsilon chains, while a peripheral stalk is formed by the delta and b chains.

Its subcellular location is the cell inner membrane. The enzyme catalyses ATP + H2O + 4 H(+)(in) = ADP + phosphate + 5 H(+)(out). Functionally, produces ATP from ADP in the presence of a proton gradient across the membrane. The catalytic sites are hosted primarily by the beta subunits. The polypeptide is ATP synthase subunit beta (Afipia carboxidovorans (strain ATCC 49405 / DSM 1227 / KCTC 32145 / OM5) (Oligotropha carboxidovorans)).